A 242-amino-acid chain; its full sequence is Probable 2-phosphosulfolactate phosphatase (242 aa).

The protein belongs to the ComB family. It depends on Mg(2+) as a cofactor.

It catalyses the reaction (2R)-O-phospho-3-sulfolactate + H2O = (2R)-3-sulfolactate + phosphate. In Synechococcus sp. (strain JA-2-3B'a(2-13)) (Cyanobacteria bacterium Yellowstone B-Prime), this protein is Probable 2-phosphosulfolactate phosphatase.